The chain runs to 330 residues: DNA primase small subunit PriS (330 aa).

Active-site residues include Asp-101 and Asp-103. Residues Cys-116, Cys-119, Cys-128, and Asp-131 each contribute to the Zn(2+) site. Residue Asp-235 is part of the active site.

This sequence belongs to the eukaryotic-type primase small subunit family. Heterodimer of a small subunit (PriS) and a large subunit (PriL). The cofactor is Mg(2+). Mn(2+) serves as cofactor.

Catalytic subunit of DNA primase, an RNA polymerase that catalyzes the synthesis of short RNA molecules used as primers for DNA polymerase during DNA replication. The small subunit contains the primase catalytic core and has DNA synthesis activity on its own. Binding to the large subunit stabilizes and modulates the activity, increasing the rate of DNA synthesis while decreasing the length of the DNA fragments, and conferring RNA synthesis capability. The DNA polymerase activity may enable DNA primase to also catalyze primer extension after primer synthesis. May also play a role in DNA repair. The polypeptide is DNA primase small subunit PriS (Saccharolobus islandicus (strain M.16.27) (Sulfolobus islandicus)).